The sequence spans 442 residues: Cyclic AMP receptor-like protein B (442 aa).

Residues 1-16 (MGGDIHLCSMILGKNH) are Extracellular-facing. The helical transmembrane segment at 17-37 (LIFLYFANLFGSTLSFLATII) threads the bilayer. The Cytoplasmic portion of the chain corresponds to 38 to 219 (TIVFYLVKKY…PKKIDTLIFY (182 aa)). The tract at residues 83–166 (YSSTPISIQN…LSSSDKNNTI (84 aa)) is disordered. The span at 91-103 (QNNNNKNNNLPKQ) shows a compositional bias: low complexity. A compositionally biased stretch (polar residues) spans 112–122 (INKNHNNYCNY). Residues 123 to 144 (STSATSSSSSSSSFSSTNSGSS) show a composition bias toward low complexity. Positions 145-166 (YEYQQPQKNQQTLSSSDKNNTI) are enriched in polar residues. A helical membrane pass occupies residues 220-240 (LSISDFIAVSGIIIEQLIIIF). Topologically, residues 241-255 (NKEISKSIGFCIGER) are extracellular. A helical membrane pass occupies residues 256–276 (VSIHFGLLATLFWSNCIAYYL). At 277-289 (LRETYELKPYNIR) the chain is on the cytoplasmic side. The helical transmembrane segment at 290 to 310 (FVYFHIVCWGMALIGVASLFF) threads the bilayer. Over 311-334 (SKIITVSNIDQGGSWCSVSSSYQL) the chain is Extracellular. A helical membrane pass occupies residues 335–355 (YFWVIPLFVSFTWNLICYCLI). Residues 356 to 382 (YRKFNKIIGIYGIQSVQIKTIIIRKLS) are Cytoplasmic-facing. Residues 383-403 (FYLLAFLITWVWDVINNSIFL) traverse the membrane as a helical segment. Residues 404–410 (YEGKCPP) are Extracellular-facing. Residues 411–431 (FALWILQEFFSSGYGFFNSLA) form a helical membrane-spanning segment. Over 432–442 (YAVTTRFYSRK) the chain is Cytoplasmic.

The protein belongs to the G-protein coupled receptor 5 family.

Its subcellular location is the membrane. Its function is as follows. Receptor for cAMP. The sequence is that of Cyclic AMP receptor-like protein B (crlB) from Dictyostelium discoideum (Social amoeba).